The sequence spans 683 residues: U4/U6 small nuclear ribonucleoprotein Prp3 (683 aa).

The PWI domain occupies 1–87 (MALSKRELDE…HSKSSSDRSR (87 aa)). Residues 73-107 (GRSSRHSKSSSDRSRKRELKEVFGDDSEISKESSG) are compositionally biased toward basic and acidic residues. Positions 73-135 (GRSSRHSKSS…IPGPPSESPG (63 aa)) are disordered. K139 is covalently cross-linked (Glycyl lysine isopeptide (Lys-Gly) (interchain with G-Cter in SUMO2)). Positions 153-183 (IEERKKQLSFISPPTPQPKTPSSSQPERLPI) are disordered. S164 carries the phosphoserine modification. T167 is subject to Phosphothreonine. Residues K244 and K252 each participate in a glycyl lysine isopeptide (Lys-Gly) (interchain with G-Cter in SUMO2) cross-link. The segment at 416 to 550 (NLVEHPAQLN…VHISVYRVRN (135 aa)) is mediates interaction with SART3. S619 is subject to Phosphoserine.

As to quaternary structure, component of the precatalytic spliceosome (spliceosome B complex). Component of the U4/U6-U5 tri-snRNP complex, a building block of the precatalytic spliceosome (spliceosome B complex). The U4/U6-U5 tri-snRNP complex is composed of the U4, U6 and U5 snRNAs and at least PRPF3, PRPF4, PRPF6, PRPF8, PRPF31, SNRNP200, TXNL4A, SNRNP40, SNRPB, SNRPD1, SNRPD2, SNRPD3, SNRPE, SNRPF, SNRPG, DDX23, CD2BP2, PPIH, SNU13, EFTUD2, SART1 and USP39, plus LSM2, LSM3, LSM4, LSM5, LSM6, LSM7 and LSM8. Interacts directly with PRPF4. Part of a heteromeric complex containing PPIH, PRPF3 and PRPF4 that is stable in the absence of RNA. Interacts with SART3; the interaction is direct and recruits the deubiquitinase USP4 to PRPF3. Interacts with PRPF19. Interacts ('Lys-63'-linked polyubiquitinated) with PRPF8 (via the MPN (JAB/Mov34) domain); may stabilize the U4/U6-U5 tri-snRNP complex. Interacts with ERCC6. Ubiquitinated. Undergoes 'Lys-63'-linked polyubiquitination by PRPF19 and deubiquitination by USP4. 'Lys-63'-linked ubiquitination increases the affinity for PRPF8 and may regulate the assembly of the U4/U6-U5 tri-snRNP complex. In terms of tissue distribution, highly expressed in retina, liver, kidney and blood. Detected at lower levels in heart and brain.

The protein resides in the nucleus. It is found in the nucleus speckle. Plays a role in pre-mRNA splicing as component of the U4/U6-U5 tri-snRNP complex that is involved in spliceosome assembly, and as component of the precatalytic spliceosome (spliceosome B complex). This chain is U4/U6 small nuclear ribonucleoprotein Prp3 (PRPF3), found in Homo sapiens (Human).